Consider the following 1314-residue polypeptide: Synergin gamma (1314 aa).

The stretch at 115 to 155 (MQKQFAEEQQKRFEQQQKLLEEERKRRQFEEQKQKLRLLSS) forms a coiled coil. Residues 178-199 (GFSRDAKMHPTPASHPKKPGPS) form a disordered region. The EH domain occupies 295–388 (NESLVPDAYK…QFPAAPIPTL (94 aa)). A DFXDF motif 1 motif is present at residues 457 to 461 (DFQDF). Positions 460–498 (DFQDASKSGSLDDSFSDFQELPASSKTSNSQHGNSAPSL) are disordered. The segment covering 462 to 496 (QDASKSGSLDDSFSDFQELPASSKTSNSQHGNSAP) has biased composition (polar residues). Position 473 is a phosphoserine (S473). K513 is modified (N6-acetyllysine). Residues 518-786 (KGIAADKSSE…ADFHSSKFSS (269 aa)) form an interaction with AP1G1 region. Residue S580 is modified to Phosphoserine. An interaction with AP1G1, AP1G2 and GGA1 region spans residues 666-678 (LADDFGEFSLFGE). The DFXDF motif 2 motif lies at 690–694 (DFADF). S720 carries the phosphoserine modification. K744 is subject to N6-acetyllysine. S752 and S772 each carry phosphoserine. The short motif at 775–779 (DFADF) is the DFXDF motif 3 element. A phosphoserine mark is found at S812, S852, S855, S909, S919, and S935. Disordered stretches follow at residues 972-1026 (PQTS…DFGE) and 1073-1102 (SLSL…NTLN). The span at 976 to 990 (EQKEYENRDYKDFTK) shows a compositional bias: basic and acidic residues. The span at 1001-1019 (EATCPSPASSGASQETPNE) shows a compositional bias: polar residues. Phosphoserine occurs at positions 1006, 1073, 1075, 1087, and 1098. T1100 carries the post-translational modification Phosphothreonine.

As to quaternary structure, self-associates. Interacts with GGA1 (via GAE domain). Interacts with GGA2 and GGA3. Interacts with AP1G1 (via GAE domain), a subunit of adapter protein complex AP-1. Interacts with AP1G2 (via GAE domain) a subunit of adapter protein complex AP-1. Component of the aftiphilin/p200/gamma-synergin complex, at least composed of AFTPH/aftiphilin, HEATR5B/p200a and SYNRG/gamma-synergin, which plays a role in the AP1G1/AP-1-mediated trafficking of transferrin from early to recycling endosomes. Within the complex interacts with AFTPH/aftiphilin and HEATR5B/p200a; the interactions are direct. Interacts (via EH domain) with SCAMP1.

The protein resides in the cytoplasm. It localises to the golgi apparatus. It is found in the trans-Golgi network membrane. Its subcellular location is the perinuclear region. The protein localises to the cytoplasmic vesicle. The protein resides in the clathrin-coated vesicle. Its function is as follows. Plays a role in endocytosis and/or membrane trafficking at the trans-Golgi network (TGN). May act by linking the adapter protein complex AP-1 to other proteins. Component of clathrin-coated vesicles. Component of the aftiphilin/p200/gamma-synergin complex, which plays roles in AP1G1/AP-1-mediated protein trafficking including the trafficking of transferrin from early to recycling endosomes, and the membrane trafficking of furin and the lysosomal enzyme cathepsin D between the trans-Golgi network (TGN) and endosomes. The protein is Synergin gamma of Homo sapiens (Human).